Reading from the N-terminus, the 248-residue chain is 4-hydroxy-tetrahydrodipicolinate reductase (248 aa).

NAD(+) is bound by residues Asp-32, 74–76 (GTT), and 99–102 (SANF). The Proton donor/acceptor role is filled by His-134. His-135 lines the (S)-2,3,4,5-tetrahydrodipicolinate pocket. Residue Lys-138 is the Proton donor of the active site. Residue 144–145 (GT) participates in (S)-2,3,4,5-tetrahydrodipicolinate binding.

This sequence belongs to the DapB family.

The protein localises to the cytoplasm. It catalyses the reaction (S)-2,3,4,5-tetrahydrodipicolinate + NAD(+) + H2O = (2S,4S)-4-hydroxy-2,3,4,5-tetrahydrodipicolinate + NADH + H(+). It carries out the reaction (S)-2,3,4,5-tetrahydrodipicolinate + NADP(+) + H2O = (2S,4S)-4-hydroxy-2,3,4,5-tetrahydrodipicolinate + NADPH + H(+). It participates in amino-acid biosynthesis; L-lysine biosynthesis via DAP pathway; (S)-tetrahydrodipicolinate from L-aspartate: step 4/4. Catalyzes the conversion of 4-hydroxy-tetrahydrodipicolinate (HTPA) to tetrahydrodipicolinate. The chain is 4-hydroxy-tetrahydrodipicolinate reductase from Chlorobium limicola (strain DSM 245 / NBRC 103803 / 6330).